Consider the following 385-residue polypeptide: 1-deoxy-D-xylulose 5-phosphate reductoisomerase (385 aa).

Residues threonine 10, glycine 11, serine 12, isoleucine 13, lysine 37, and asparagine 124 each contribute to the NADPH site. Lysine 125 provides a ligand contact to 1-deoxy-D-xylulose 5-phosphate. An NADPH-binding site is contributed by glutamate 126. Aspartate 150 lines the Mn(2+) pocket. Residues serine 151, glutamate 152, serine 176, and histidine 199 each contribute to the 1-deoxy-D-xylulose 5-phosphate site. Glutamate 152 is a binding site for Mn(2+). Glycine 205 contributes to the NADPH binding site. The 1-deoxy-D-xylulose 5-phosphate site is built by serine 212, asparagine 217, lysine 218, and glutamate 221. Glutamate 221 serves as a coordination point for Mn(2+).

It belongs to the DXR family. Mg(2+) is required as a cofactor. The cofactor is Mn(2+).

It catalyses the reaction 2-C-methyl-D-erythritol 4-phosphate + NADP(+) = 1-deoxy-D-xylulose 5-phosphate + NADPH + H(+). The protein operates within isoprenoid biosynthesis; isopentenyl diphosphate biosynthesis via DXP pathway; isopentenyl diphosphate from 1-deoxy-D-xylulose 5-phosphate: step 1/6. Functionally, catalyzes the NADPH-dependent rearrangement and reduction of 1-deoxy-D-xylulose-5-phosphate (DXP) to 2-C-methyl-D-erythritol 4-phosphate (MEP). This is 1-deoxy-D-xylulose 5-phosphate reductoisomerase from Clostridium botulinum (strain Loch Maree / Type A3).